Reading from the N-terminus, the 337-residue chain is 5-formaminoimidazole-4-carboxamide-1-(beta)-D-ribofuranosyl 5'-monophosphate synthetase (337 aa).

2 residues coordinate 5-amino-1-(5-phospho-beta-D-ribosyl)imidazole-4-carboxamide: H14 and S74. In terms of domain architecture, ATP-grasp spans 81–328 (VELVERMKVP…IAREIRLAIE (248 aa)). ATP contacts are provided by residues 125–185 (PDDI…VPVY) and E207. N235 lines the 5-amino-1-(5-phospho-beta-D-ribosyl)imidazole-4-carboxamide pocket. Residues E273 and E286 each coordinate Mg(2+).

The protein belongs to the phosphohexose mutase family. Mg(2+) is required as a cofactor. Requires Mn(2+) as cofactor.

The enzyme catalyses 5-amino-1-(5-phospho-beta-D-ribosyl)imidazole-4-carboxamide + formate + ATP = 5-formamido-1-(5-phospho-D-ribosyl)imidazole-4-carboxamide + ADP + phosphate. It functions in the pathway purine metabolism; IMP biosynthesis via de novo pathway; 5-formamido-1-(5-phospho-D-ribosyl)imidazole-4-carboxamide from 5-amino-1-(5-phospho-D-ribosyl)imidazole-4-carboxamide (formate route): step 1/1. Catalyzes the ATP- and formate-dependent formylation of 5-aminoimidazole-4-carboxamide-1-beta-d-ribofuranosyl 5'-monophosphate (AICAR) to 5-formaminoimidazole-4-carboxamide-1-beta-d-ribofuranosyl 5'-monophosphate (FAICAR) in the absence of folates. The chain is 5-formaminoimidazole-4-carboxamide-1-(beta)-D-ribofuranosyl 5'-monophosphate synthetase from Pyrococcus abyssi (strain GE5 / Orsay).